A 34-amino-acid polypeptide reads, in one-letter code: Aspartate aminotransferase 2 (34 aa).

Belongs to the class-I pyridoxal-phosphate-dependent aminotransferase family. Homodimer. The cofactor is pyridoxal 5'-phosphate.

It catalyses the reaction L-aspartate + 2-oxoglutarate = oxaloacetate + L-glutamate. Its function is as follows. Important for the metabolism of amino acids and Krebs-cycle related organic acids. In plants, it is involved in nitrogen metabolism and in aspects of carbon and energy metabolism. The protein is Aspartate aminotransferase 2 of Pseudotsuga menziesii (Douglas-fir).